Here is a 563-residue protein sequence, read N- to C-terminus: uncharacterized protein (563 aa).

The disordered stretch occupies residues 30–303 (QSIEIQPEEK…EKSPEKQVEI (274 aa)). A compositionally biased stretch (basic and acidic residues) spans 36-56 (PEEKPSEEKQPEEKSSEEKPK). Polar residues predominate over residues 61-72 (SAINSEKTQKPI). 3 stretches are compositionally biased toward basic and acidic residues: residues 101–115 (TTERPQPKTTMDDKQ), 123–276 (ERGR…EPRP), and 282–303 (EKSPDEHQEKHQEKSPEKQVEI).

It belongs to the mimivirus L41 family.

This is an uncharacterized protein from Acanthamoeba polyphaga (Amoeba).